Consider the following 272-residue polypeptide: Probable feruloyl esterase C (272 aa).

The signal sequence occupies residues 1–22 (MLPTILYSAILALSALTPSALA).

It belongs to the faeC family.

The protein localises to the secreted. The catalysed reaction is feruloyl-polysaccharide + H2O = ferulate + polysaccharide.. Its function is as follows. Involved in degradation of plant cell walls. Hydrolyzes the feruloyl-arabinose ester bond in arabinoxylans, and the feruloyl-galactose ester bond in pectin. Active against paranitrophenyl-acetate, methyl ferulate and wheat arabinoxylan. The protein is Probable feruloyl esterase C (faeC-1) of Aspergillus clavatus (strain ATCC 1007 / CBS 513.65 / DSM 816 / NCTC 3887 / NRRL 1 / QM 1276 / 107).